We begin with the raw amino-acid sequence, 120 residues long: MSIRTEKVASLLQRELSAIFEKELPRSGPLATVTEVKVTADLGIARVYVSIIGSEAQRAELMEFLHTETKALRKILSSKIRNQFRRIPELEFYEDRLFEQANRIEELLKSVRRGPAEEQL.

It belongs to the RbfA family. In terms of assembly, monomer. Binds 30S ribosomal subunits, but not 50S ribosomal subunits or 70S ribosomes.

The protein localises to the cytoplasm. In terms of biological role, one of several proteins that assist in the late maturation steps of the functional core of the 30S ribosomal subunit. Associates with free 30S ribosomal subunits (but not with 30S subunits that are part of 70S ribosomes or polysomes). Required for efficient processing of 16S rRNA. May interact with the 5'-terminal helix region of 16S rRNA. This Chlorobaculum parvum (strain DSM 263 / NCIMB 8327) (Chlorobium vibrioforme subsp. thiosulfatophilum) protein is Ribosome-binding factor A.